A 178-amino-acid chain; its full sequence is MNPLLQDYARILLEWNQTHNLSGAKHLSELEPQITDALKPLEFIKDFKSCLDIGSGAGLPAIPLALEKPEVKFILLEPRMKRAAFLNYLKSVLPLKNIEIVKKRLEEYQNPLQVDLITSRAVANSSFLIEKSQRFLNDKGYFLFYKGEQLKDEIAYKDTECFICKKRIYFYKPKESLC.

S-adenosyl-L-methionine contacts are provided by residues G54, L59, 105–106 (LE), and R120.

This sequence belongs to the methyltransferase superfamily. RNA methyltransferase RsmG family.

The protein localises to the cytoplasm. The enzyme catalyses guanosine(527) in 16S rRNA + S-adenosyl-L-methionine = N(7)-methylguanosine(527) in 16S rRNA + S-adenosyl-L-homocysteine. Specifically methylates the N7 position of guanine in position 527 of 16S rRNA. This is Ribosomal RNA small subunit methyltransferase G from Helicobacter acinonychis (strain Sheeba).